A 567-amino-acid polypeptide reads, in one-letter code: DNA ligase B (567 aa).

Residue K126 is the N6-AMP-lysine intermediate of the active site.

This sequence belongs to the NAD-dependent DNA ligase family. LigB subfamily.

The enzyme catalyses NAD(+) + (deoxyribonucleotide)n-3'-hydroxyl + 5'-phospho-(deoxyribonucleotide)m = (deoxyribonucleotide)n+m + AMP + beta-nicotinamide D-nucleotide.. In terms of biological role, catalyzes the formation of phosphodiester linkages between 5'-phosphoryl and 3'-hydroxyl groups in double-stranded DNA using NAD as a coenzyme and as the energy source for the reaction. The polypeptide is DNA ligase B (Pseudomonas putida (strain W619)).